The sequence spans 195 residues: HTH-type transcriptional regulator BetI (195 aa).

The HTH tetR-type domain occupies 8 to 68 (SIRRRQLIDA…ATMRDITSQL (61 aa)). A DNA-binding region (H-T-H motif) is located at residues 31–50 (TIAQIARRAGVSTGIISHYF).

It functions in the pathway amine and polyamine biosynthesis; betaine biosynthesis via choline pathway [regulation]. Functionally, repressor involved in the biosynthesis of the osmoprotectant glycine betaine. It represses transcription of the choline transporter BetT and the genes of BetAB involved in the synthesis of glycine betaine. The sequence is that of HTH-type transcriptional regulator BetI from Escherichia coli O157:H7.